We begin with the raw amino-acid sequence, 293 residues long: Diaminopimelate epimerase (293 aa).

Residues N17, Q49, and N69 each contribute to the substrate site. C78 serves as the catalytic Proton donor. Substrate contacts are provided by residues 79–80, N169, N203, and 221–222; these read GN and ER. C230 serves as the catalytic Proton acceptor. 231–232 provides a ligand contact to substrate; the sequence is GS.

The protein belongs to the diaminopimelate epimerase family. Homodimer.

It is found in the cytoplasm. The catalysed reaction is (2S,6S)-2,6-diaminopimelate = meso-2,6-diaminopimelate. The protein operates within amino-acid biosynthesis; L-lysine biosynthesis via DAP pathway; DL-2,6-diaminopimelate from LL-2,6-diaminopimelate: step 1/1. In terms of biological role, catalyzes the stereoinversion of LL-2,6-diaminopimelate (L,L-DAP) to meso-diaminopimelate (meso-DAP), a precursor of L-lysine and an essential component of the bacterial peptidoglycan. This is Diaminopimelate epimerase from Methylobacterium sp. (strain 4-46).